A 368-amino-acid polypeptide reads, in one-letter code: Proline-rich protein 5-like (368 aa).

Ser-28 carries the phosphoserine modification. Residues 327–368 (PSFPPPHRQCSSEPNITDNPDGLEEGARGSQEGSELNCASLS) form a disordered region. Polar residues-rich tracts occupy residues 335–344 (QCSSEPNITD) and 357–368 (QEGSELNCASLS).

It belongs to the PROTOR family. In terms of assembly, interacts with the mammalian target of rapamycin complex 2 (mTORC2) which contains MTOR, MLST8, PRR5, RICTOR, MAPKAP1 and DEPTOR. Interacts with RFFL. Interacts (via C-terminus) with ZFP36 (via C-terminus); this interaction may accelerate ZFP36-mediated mRNA decay during stress. Interacts with RICTOR. Ubiquitinated. Ubiquitination by RFFL promotes proteasomal degradation of PRR5L thereby modifying the substrate-specific activity of the mTORC2 complex. Ubiquitination by RFFL is stimulated by LPA/lysophosphatidic acid.

Its function is as follows. Associates with the mTORC2 complex that regulates cellular processes including survival and organization of the cytoskeleton. Regulates the activity of the mTORC2 complex in a substrate-specific manner preventing for instance the specific phosphorylation of PKCs and thereby controlling cell migration. Plays a role in the stimulation of ZFP36-mediated mRNA decay of several ZFP36-associated mRNAs, such as TNF-alpha and GM-CSF, in response to stress. Required for ZFP36 localization to cytoplasmic stress granule (SG) and P-body (PB) in response to stress. This is Proline-rich protein 5-like (PRR5L) from Homo sapiens (Human).